Here is a 341-residue protein sequence, read N- to C-terminus: L-sulfolactate dehydrogenase (341 aa).

It belongs to the LDH2/MDH2 oxidoreductase family.

The protein localises to the cytoplasm. It catalyses the reaction a (2S)-2-hydroxycarboxylate + NAD(+) = a 2-oxocarboxylate + NADH + H(+). Its pathway is cofactor biosynthesis; coenzyme M biosynthesis; sulfoacetaldehyde from phosphoenolpyruvate and sulfite: step 3/4. It participates in cofactor biosynthesis; 5,6,7,8-tetrahydromethanopterin biosynthesis. Catalyzes the reduction of sulfopyruvate to (R)-sulfolactate. Involved in the biosynthesis of both coenzyme M (with (R)-sulfolactate) and methanopterin (with alpha-ketoglutarate). The chain is L-sulfolactate dehydrogenase (comC) from Methanothermobacter thermautotrophicus (strain ATCC 29096 / DSM 1053 / JCM 10044 / NBRC 100330 / Delta H) (Methanobacterium thermoautotrophicum).